We begin with the raw amino-acid sequence, 122 residues long: Ribosome-binding factor A (122 aa).

This sequence belongs to the RbfA family. As to quaternary structure, monomer. Binds 30S ribosomal subunits, but not 50S ribosomal subunits or 70S ribosomes.

The protein resides in the cytoplasm. In terms of biological role, one of several proteins that assist in the late maturation steps of the functional core of the 30S ribosomal subunit. Associates with free 30S ribosomal subunits (but not with 30S subunits that are part of 70S ribosomes or polysomes). Required for efficient processing of 16S rRNA. May interact with the 5'-terminal helix region of 16S rRNA. This chain is Ribosome-binding factor A, found in Burkholderia mallei (strain NCTC 10229).